Consider the following 296-residue polypeptide: dTDP-4-dehydrorhamnose reductase (296 aa).

Residues 10–12 (GQI), 35–36 (DL), and 59–61 (AYT) each bind NADH. NADPH contacts are provided by residues 11–12 (QI), 35–36 (DL), and 59–61 (AYT). 100 to 101 (TD) provides a ligand contact to dTDP-beta-L-rhamnose. Positions 124 and 128 each coordinate NADH. NADPH-binding residues include Y124 and K128. Y124 functions as the Proton donor/acceptor in the catalytic mechanism. Position 149 (W149) interacts with dTDP-beta-L-rhamnose.

This sequence belongs to the dTDP-4-dehydrorhamnose reductase family. Homodimer. The cofactor is Mg(2+).

It catalyses the reaction dTDP-beta-L-rhamnose + NADP(+) = dTDP-4-dehydro-beta-L-rhamnose + NADPH + H(+). The protein operates within carbohydrate biosynthesis; dTDP-L-rhamnose biosynthesis. Its function is as follows. Involved in the biosynthesis of the dTDP-L-rhamnose which is an important component of lipopolysaccharide (LPS). Catalyzes the reduction of dTDP-6-deoxy-L-lyxo-4-hexulose to yield dTDP-L-rhamnose. RmlD uses NADH and NADPH nearly equally well. This Sinorhizobium fredii (strain NBRC 101917 / NGR234) protein is dTDP-4-dehydrorhamnose reductase.